A 656-amino-acid chain; its full sequence is DNA ligase (656 aa).

NAD(+) contacts are provided by residues Asp32–Asp36, Ser81–Met82, and Glu112. Lys114 acts as the N6-AMP-lysine intermediate in catalysis. NAD(+) is bound by residues Arg135, Glu169, Lys284, and Lys308. 4 residues coordinate Zn(2+): Cys402, Cys405, Cys418, and Cys423. One can recognise a BRCT domain in the interval Val577–Lys656.

The protein belongs to the NAD-dependent DNA ligase family. LigA subfamily. The cofactor is Mg(2+). Mn(2+) is required as a cofactor.

It catalyses the reaction NAD(+) + (deoxyribonucleotide)n-3'-hydroxyl + 5'-phospho-(deoxyribonucleotide)m = (deoxyribonucleotide)n+m + AMP + beta-nicotinamide D-nucleotide.. Its function is as follows. DNA ligase that catalyzes the formation of phosphodiester linkages between 5'-phosphoryl and 3'-hydroxyl groups in double-stranded DNA using NAD as a coenzyme and as the energy source for the reaction. It is essential for DNA replication and repair of damaged DNA. The chain is DNA ligase from Nautilia profundicola (strain ATCC BAA-1463 / DSM 18972 / AmH).